The following is a 533-amino-acid chain: MGKWTDKLYITHSEWSGEVGQHSASSGITGRNSSGGFKRLPFYCCSLSLQPFEHPVCTPDGIIFDLMNIIPYIKKYGTNPVTGEKLETKNLIKLHFHKNDKDEYFCPVTYKVFSDHTTIAAIKTTGNVFAYDTLEKLNIKAKHWKDLLTDEPFTRKDIIMLQDPHNLEKKDMSKFDYLKNNKPEELEKRKPINNINVAGMGNTKKVFDELQKKNSNEDDNKAIEKKEEIPTSFHKKRETLPYNAAHYTTGEAAESFTSTVVNAYTASTRALIDEDEFMYKKIKKKSYARIITNYGNINVELFSDKKPKTCHNFIELAKTGYYNDVIFHRNIKKFMIQGGDPTGTGKGGESIWKRYFPDEIKTTLKHDARGVLSMANRGKDTNGSQFFITYAAAPHLDGLHTVFGKVVGGLDVLSKLESIPVDEKDRPEREIKIKQIQMFVDPFEEYQRRLKNKLTHEANAERENEEMRKRREKEEKMGWFGPSVPKIQTSGGGGVGKYLQSTKRDNSEISNEGEELQKKQKITKTTFGNFDNF.

A U-box domain is found at Lys-38–Lys-111. One can recognise a PPIase cyclophilin-type domain in the interval Lys-284–Met-438. The stretch at Phe-443–Lys-519 forms a coiled coil. Residues Leu-454–Met-477 are compositionally biased toward basic and acidic residues. Residues Leu-454 to Phe-533 are disordered. Residues Thr-523–Phe-533 show a composition bias toward polar residues.

This sequence belongs to the cyclophilin-type PPIase family. PPIL2 subfamily.

It localises to the nucleus. It catalyses the reaction [protein]-peptidylproline (omega=180) = [protein]-peptidylproline (omega=0). The catalysed reaction is S-ubiquitinyl-[E2 ubiquitin-conjugating enzyme]-L-cysteine + [acceptor protein]-L-lysine = [E2 ubiquitin-conjugating enzyme]-L-cysteine + N(6)-ubiquitinyl-[acceptor protein]-L-lysine.. Its pathway is protein modification; protein ubiquitination. In terms of biological role, may catalyze the cis-trans isomerization of proline imidic peptide bonds in oligopeptides thereby assisting the folding of proteins. May also function as a chaperone, playing a role in intracellular transport of proteins. May also have a protein ubiquitin ligase activity acting as an E3 ubiquitin protein ligase or as a ubiquitin-ubiquitin ligase promoting elongation of ubiquitin chains on proteins. In Rhizopus delemar (strain RA 99-880 / ATCC MYA-4621 / FGSC 9543 / NRRL 43880) (Mucormycosis agent), this protein is Peptidyl-prolyl cis-trans isomerase-like 2 (cyp14).